The following is a 639-amino-acid chain: PTS-dependent dihydroxyacetone kinase operon regulatory protein (639 aa).

Residues 1–318 (MSGAFNNDGR…MRQLMTSQLG (318 aa)) are sensor domain. Residues 52-189 (AMLTLGQAAL…AIAREVGNLL (138 aa)) enclose the GAF domain. Residues 203 to 265 (NQLNALLESM…AVLQQAIKQA (63 aa)) enclose the PAS domain. A Sigma-54 factor interaction domain is found at 327–552 (MPQDDPQTRR…LYSVIENLAL (226 aa)). ATP is bound by residues 355 to 362 (GEEGVGKA) and 415 to 424 (AHGGTLFLEK).

As to quaternary structure, homodimer. DhaR forms complexes with DhaK and DhaL-ADP.

In terms of biological role, positively regulates the dhaKLM operon from a sigma-70 promoter. Represses its own expression. This Escherichia coli (strain K12) protein is PTS-dependent dihydroxyacetone kinase operon regulatory protein.